The following is a 305-amino-acid chain: Ribosomal RNA small subunit methyltransferase H (305 aa).

S-adenosyl-L-methionine contacts are provided by residues 33 to 35 (GGH), Asp52, Asp97, and Gln104.

Belongs to the methyltransferase superfamily. RsmH family.

It is found in the cytoplasm. It catalyses the reaction cytidine(1402) in 16S rRNA + S-adenosyl-L-methionine = N(4)-methylcytidine(1402) in 16S rRNA + S-adenosyl-L-homocysteine + H(+). Functionally, specifically methylates the N4 position of cytidine in position 1402 (C1402) of 16S rRNA. This is Ribosomal RNA small subunit methyltransferase H from Campylobacter lari (strain RM2100 / D67 / ATCC BAA-1060).